The primary structure comprises 62 residues: Cytotoxin 6 (62 aa).

Residues 1–2 form the signal peptide; the sequence is YT. 4 cysteine pairs are disulfide-bonded: cysteine 5-cysteine 23, cysteine 16-cysteine 40, cysteine 44-cysteine 55, and cysteine 56-cysteine 61.

It belongs to the three-finger toxin family. Short-chain subfamily. Type IA cytotoxin sub-subfamily. Monomer in solution; Homodimer and oligomer in the presence of negatively charged lipids forming a pore with a size ranging between 20 and 30 Angstroms. In terms of tissue distribution, expressed by the venom gland.

It is found in the secreted. It localises to the target cell membrane. Functionally, shows cytolytic activity on many different cells by forming pore in lipid membranes. In vivo, increases heart rate or kills the animal by cardiac arrest. In addition, it binds to heparin with high affinity, interacts with Kv channel-interacting protein 1 (KCNIP1) in a calcium-independent manner, and binds to integrin alpha-V/beta-3 (ITGAV/ITGB3) with moderate affinity. This Naja sputatrix (Malayan spitting cobra) protein is Cytotoxin 6.